Consider the following 408-residue polypeptide: Multidrug resistance protein MdtG (408 aa).

The next 10 helical transmembrane spans lie at 16-36 (LIVA…VMPF), 58-78 (IVFS…GGLA), 92-112 (LGMG…QFLI), 115-135 (ALLG…ATQV), 146-166 (TLST…GLLA), 173-193 (PVFF…LFCI), 224-244 (LFVT…ILTL), 256-276 (VAFI…LSAP), 290-310 (ILIT…YVQT), and 378-398 (AVFL…WNSL).

This sequence belongs to the major facilitator superfamily. DHA1 family. MdtG (TC 2.A.1.2.20) subfamily.

The protein localises to the cell inner membrane. Functionally, confers resistance to fosfomycin and deoxycholate. The polypeptide is Multidrug resistance protein MdtG (Escherichia coli O17:K52:H18 (strain UMN026 / ExPEC)).